A 249-amino-acid chain; its full sequence is Metallo-beta-lactamase type 2 (249 aa).

The signal sequence occupies residues 1–22 (MLKKIKISLILALGLTSLQAFG). Residues H98, H100, D102, H161, and C180 each coordinate Zn(2+). K183 contacts substrate. Residue H222 participates in Zn(2+) binding.

Belongs to the metallo-beta-lactamase superfamily. Class-B beta-lactamase family. In terms of assembly, monomer. Requires Zn(2+) as cofactor.

It is found in the periplasm. It carries out the reaction a beta-lactam + H2O = a substituted beta-amino acid. In terms of biological role, confers resistance to the different beta-lactams antibiotics (penicillin, cephalosporin and carbapenem) via the hydrolysis of the beta-lactam ring. This is Metallo-beta-lactamase type 2 (blaB3) from Elizabethkingia meningoseptica (Chryseobacterium meningosepticum).